Here is a 162-residue protein sequence, read N- to C-terminus: Phenazine biosynthesis protein PhzB 2 (162 aa).

At T91 the chain carries Phosphothreonine.

It belongs to the PhzA/PhzB family.

Its function is as follows. Involved in the biosynthesis of the antibiotic phenazine, a nitrogen-containing heterocyclic molecule having important roles in virulence, competition and biological control. The polypeptide is Phenazine biosynthesis protein PhzB 2 (phzB2) (Pseudomonas aeruginosa (strain UCBPP-PA14)).